We begin with the raw amino-acid sequence, 395 residues long: L-rhamnonate dehydratase (395 aa).

Substrate is bound by residues H23 and R49. 3 residues coordinate Mg(2+): D215, E241, and E269. Residue H319 is the Proton acceptor of the active site. E339 contacts substrate.

This sequence belongs to the mandelate racemase/muconate lactonizing enzyme family. RhamD subfamily. Homooctamer; tetramer of dimers. Requires Mg(2+) as cofactor.

It carries out the reaction L-rhamnonate = 2-dehydro-3-deoxy-L-rhamnonate + H2O. Catalyzes the dehydration of L-rhamnonate to 2-keto-3-deoxy-L-rhamnonate (KDR). The chain is L-rhamnonate dehydratase from Delftia acidovorans (strain DSM 14801 / SPH-1).